Reading from the N-terminus, the 118-residue chain is Ribonuclease P protein component (118 aa).

This sequence belongs to the RnpA family. Consists of a catalytic RNA component (M1 or rnpB) and a protein subunit.

It catalyses the reaction Endonucleolytic cleavage of RNA, removing 5'-extranucleotides from tRNA precursor.. In terms of biological role, RNaseP catalyzes the removal of the 5'-leader sequence from pre-tRNA to produce the mature 5'-terminus. It can also cleave other RNA substrates such as 4.5S RNA. The protein component plays an auxiliary but essential role in vivo by binding to the 5'-leader sequence and broadening the substrate specificity of the ribozyme. The protein is Ribonuclease P protein component of Rickettsia canadensis (strain McKiel).